Consider the following 128-residue polypeptide: NHP2-like protein 1 (128 aa).

The interaction with U4 snRNA and U4atac snRNA stretch occupies residues 36-48 (RKGANEATKTLNR). The segment at 96 to 128 (SRPVIACSVTIKEGSQLKPQIQSVQQAIERLLV) is important for U4 snRNA-binding.

It belongs to the eukaryotic ribosomal protein eL8 family. As to quaternary structure, identified in the spliceosome B complex. Component of the U4/U6-U5 tri-snRNP complex. Part of the small subunit (SSU) processome, composed of more than 70 proteins and the RNA chaperone small nucleolar RNA (snoRNA) U3.

It localises to the nucleus. The protein resides in the nucleolus. Part of the small subunit (SSU) processome, first precursor of the small eukaryotic ribosomal subunit. During the assembly of the SSU processome in the nucleolus, many ribosome biogenesis factors, an RNA chaperone and ribosomal proteins associate with the nascent pre-rRNA and work in concert to generate RNA folding, modifications, rearrangements and cleavage as well as targeted degradation of pre-ribosomal RNA by the RNA exosome. Involved in pre-mRNA splicing as component of the spliceosome. Binds to the 5'-stem-loop of U4 snRNA and thereby contributes to spliceosome assembly. The protein undergoes a conformational change upon RNA-binding. Core component of box C/D small nucleolar ribonucleoprotein (snoRNP) complexes that function in methylation of multiple sites on ribosomal RNAs (rRNAs) and messenger RNAs (mRNAs). The chain is NHP2-like protein 1 from Xenopus laevis (African clawed frog).